Reading from the N-terminus, the 101-residue chain is NAD(P)H-quinone oxidoreductase subunit 4L, chloroplastic (101 aa).

3 helical membrane-spanning segments follow: residues 2-22 (ILDS…YGLI), 32-52 (MSLE…SNFI), and 64-84 (IFIM…ILAI).

Belongs to the complex I subunit 4L family. As to quaternary structure, NDH is composed of at least 16 different subunits, 5 of which are encoded in the nucleus.

The protein localises to the plastid. It is found in the chloroplast thylakoid membrane. It carries out the reaction a plastoquinone + NADH + (n+1) H(+)(in) = a plastoquinol + NAD(+) + n H(+)(out). The enzyme catalyses a plastoquinone + NADPH + (n+1) H(+)(in) = a plastoquinol + NADP(+) + n H(+)(out). In terms of biological role, NDH shuttles electrons from NAD(P)H:plastoquinone, via FMN and iron-sulfur (Fe-S) centers, to quinones in the photosynthetic chain and possibly in a chloroplast respiratory chain. The immediate electron acceptor for the enzyme in this species is believed to be plastoquinone. Couples the redox reaction to proton translocation, and thus conserves the redox energy in a proton gradient. The sequence is that of NAD(P)H-quinone oxidoreductase subunit 4L, chloroplastic from Chlorokybus atmophyticus (Soil alga).